The sequence spans 462 residues: Ribosomal oxygenase 2 (462 aa).

Residues 1–24 (MPKKARPAGDGKEQGPAPKQVKVE) form a disordered region. One can recognise a JmjC domain in the interval 139-271 (QPQRFKDELW…SSWGDFLLDT (133 aa)). The Fe cation site is built by H179, D181, and H240. A Phosphoserine modification is found at S308.

It belongs to the ROX family. MINA53 subfamily. Fe(2+) serves as cofactor.

It localises to the nucleus. Its subcellular location is the nucleolus. The enzyme catalyses L-histidyl-[ribosomal protein uL15] + 2-oxoglutarate + O2 = (3S)-3-hydroxy-L-histidyl-[ribosomal protein uL15] + succinate + CO2. The catalysed reaction is L-histidyl-[protein] + 2-oxoglutarate + O2 = (3S)-3-hydroxy-L-histidyl-[protein] + succinate + CO2. In terms of biological role, oxygenase that can act as both a histone lysine demethylase and a ribosomal histidine hydroxylase. Is involved in the demethylation of trimethylated 'Lys-9' on histone H3 (H3K9me3), leading to an increase in ribosomal RNA expression. Also catalyzes the hydroxylation of 60S ribosomal protein L27a on 'His-39'. May play an important role in cell growth and survival. May be involved in ribosome biogenesis, most likely during the assembly process of pre-ribosomal particles. In Bos taurus (Bovine), this protein is Ribosomal oxygenase 2 (RIOX2).